The chain runs to 250 residues: 7-cyano-7-deazaguanine synthase (250 aa).

Leucine 28–valine 38 is a binding site for ATP. Cysteine 213, cysteine 226, cysteine 229, and cysteine 232 together coordinate Zn(2+).

Belongs to the QueC family. Requires Zn(2+) as cofactor.

It catalyses the reaction 7-carboxy-7-deazaguanine + NH4(+) + ATP = 7-cyano-7-deazaguanine + ADP + phosphate + H2O + H(+). It participates in purine metabolism; 7-cyano-7-deazaguanine biosynthesis. Catalyzes the ATP-dependent conversion of 7-carboxy-7-deazaguanine (CDG) to 7-cyano-7-deazaguanine (preQ(0)). The polypeptide is 7-cyano-7-deazaguanine synthase (Rhodopirellula baltica (strain DSM 10527 / NCIMB 13988 / SH1)).